The primary structure comprises 364 residues: DNA-(apurinic or apyrimidinic site) endonuclease (364 aa).

Basic and acidic residues-rich tracts occupy residues 1 to 12 and 23 to 39; these read MKRFFKPIEKEN and PEKR…EKNQ. The disordered stretch occupies residues 1–42; sequence MKRFFKPIEKENSPAAKKPCLSPEKRDGDGDGVEEEKNQNEP. Glu-80 serves as a coordination point for Mg(2+). The active site involves Tyr-182. 3 residues coordinate Mg(2+): Asp-222, Asn-224, and Asp-342. Asp-222 functions as the Proton donor/acceptor in the catalytic mechanism.

This sequence belongs to the DNA repair enzymes AP/exoA family. Interacts with ROS1. ROS1 is required for APE1L to stably associate with the DNA substrate. It depends on Mg(2+) as a cofactor. Expressed in leaves, flower buds and developing siliques. Not detected in roots.

The protein localises to the nucleus. The protein resides in the nucleolus. In terms of biological role, apurinic/apyrimidinic (AP) endonuclease involved in active DNA demethylation and gene imprinting. According to a report, also displays an in vitro 3'-phosphatase activity. According to another report, has no in vitro 3'-phosphatase activity. Catalyzes the conversion of the 3'-blocking groups 3'-phosphor-alpha,beta-unsaturated aldehyde (3'-PUA) generated by ROS1 to 3'-OH. Has a strong non-specific affinity to DNA. Redundant with APE2 and at least one functional allele is required for seed viability. The protein is DNA-(apurinic or apyrimidinic site) endonuclease of Arabidopsis thaliana (Mouse-ear cress).